The chain runs to 236 residues: 2-C-methyl-D-erythritol 4-phosphate cytidylyltransferase (236 aa).

The protein belongs to the IspD/TarI cytidylyltransferase family. IspD subfamily. Homodimer.

It catalyses the reaction 2-C-methyl-D-erythritol 4-phosphate + CTP + H(+) = 4-CDP-2-C-methyl-D-erythritol + diphosphate. It functions in the pathway isoprenoid biosynthesis; isopentenyl diphosphate biosynthesis via DXP pathway; isopentenyl diphosphate from 1-deoxy-D-xylulose 5-phosphate: step 2/6. Functionally, catalyzes the formation of 4-diphosphocytidyl-2-C-methyl-D-erythritol from CTP and 2-C-methyl-D-erythritol 4-phosphate (MEP). The sequence is that of 2-C-methyl-D-erythritol 4-phosphate cytidylyltransferase from Cronobacter sakazakii (strain ATCC BAA-894) (Enterobacter sakazakii).